The chain runs to 83 residues: Small ribosomal subunit protein bS20 (83 aa).

Positions 1 to 11 (MANHKSAAKRA) are enriched in basic residues. Residues 1 to 44 (MANHKSAAKRAKQSEARRLRNKSTRSSMNTAVKKVRTAKEAGTD) form a disordered region.

The protein belongs to the bacterial ribosomal protein bS20 family.

Binds directly to 16S ribosomal RNA. The sequence is that of Small ribosomal subunit protein bS20 from Desulforapulum autotrophicum (strain ATCC 43914 / DSM 3382 / VKM B-1955 / HRM2) (Desulfobacterium autotrophicum).